A 246-amino-acid chain; its full sequence is Mediator of RNA polymerase II transcription subunit 6 (246 aa).

Residues 193–246 (VQLKPGEKPVPVDQTKKEAEPIPETVKPEEKETTKNVQQTVSAKGPPEKRMRLQ) are disordered. The segment covering 206 to 226 (QTKKEAEPIPETVKPEEKETT) has biased composition (basic and acidic residues). Lysine 208 is covalently cross-linked (Glycyl lysine isopeptide (Lys-Gly) (interchain with G-Cter in SUMO2)). N6-acetyllysine is present on residues lysine 236 and lysine 241.

The protein belongs to the Mediator complex subunit 6 family. Component of the Mediator complex, which is composed of MED1, MED4, MED6, MED7, MED8, MED9, MED10, MED11, MED12, MED13, MED13L, MED14, MED15, MED16, MED17, MED18, MED19, MED20, MED21, MED22, MED23, MED24, MED25, MED26, MED27, MED29, MED30, MED31, CCNC, CDK8 and CDC2L6/CDK11. The MED12, MED13, CCNC and CDK8 subunits form a distinct module termed the CDK8 module. Mediator containing the CDK8 module is less active than Mediator lacking this module in supporting transcriptional activation. Individual preparations of the Mediator complex lacking one or more distinct subunits have been variously termed ARC, CRSP, DRIP, PC2, SMCC and TRAP. Interacts with CTNNB1 and GLI3.

The protein localises to the nucleus. Its function is as follows. Component of the Mediator complex, a coactivator involved in the regulated transcription of nearly all RNA polymerase II-dependent genes. Mediator functions as a bridge to convey information from gene-specific regulatory proteins to the basal RNA polymerase II transcription machinery. Mediator is recruited to promoters by direct interactions with regulatory proteins and serves as a scaffold for the assembly of a functional preinitiation complex with RNA polymerase II and the general transcription factors. The protein is Mediator of RNA polymerase II transcription subunit 6 (MED6) of Homo sapiens (Human).